Reading from the N-terminus, the 326-residue chain is MSTTFRGKKEEEEEEEEEKEEKEEELFNPFKEEFLEEGKTVSEEINNPFEEEEEEEIPNPFEVETNYLPEIDKLLMLYQKGFIDKDMVDLASKILGIELDLGDYKQIGKSLIKVPIIIIAKPSHFGEIKQEIPEAEIADPYSKKYPIISLLSLEKTINTLTNAKMPWKRFSIFIDASYTTDIPQSAVALLNGLIDILRKAGYDVKLYTKYGEEPITLDEESASRFVSMENPNLAKILCHAKKVQGLDKTCDDSRWWEYDLWGNRKKNVIDQDKVRQIALKYNVSPVLVRYIANSIGNPRSLRRYAESFNVPEQLVMDIAKELSSSS.

The tract at residues 1–28 is disordered; it reads MSTTFRGKKEEEEEEEEEKEEKEEELFN. Residues 11-26 are compositionally biased toward acidic residues; it reads EEEEEEEEKEEKEEEL.

The protein localises to the virion. In Acidianus two-tailed virus (ATV), this protein is Structural protein ORF326a.